Reading from the N-terminus, the 230-residue chain is NAD(P)H-quinone oxidoreductase subunit K, chloroplastic (230 aa).

Positions 43, 44, 108, and 139 each coordinate [4Fe-4S] cluster.

It belongs to the complex I 20 kDa subunit family. In terms of assembly, NDH is composed of at least 16 different subunits, 5 of which are encoded in the nucleus. Requires [4Fe-4S] cluster as cofactor.

Its subcellular location is the plastid. The protein resides in the chloroplast thylakoid membrane. It catalyses the reaction a plastoquinone + NADH + (n+1) H(+)(in) = a plastoquinol + NAD(+) + n H(+)(out). The enzyme catalyses a plastoquinone + NADPH + (n+1) H(+)(in) = a plastoquinol + NADP(+) + n H(+)(out). Its function is as follows. NDH shuttles electrons from NAD(P)H:plastoquinone, via FMN and iron-sulfur (Fe-S) centers, to quinones in the photosynthetic chain and possibly in a chloroplast respiratory chain. The immediate electron acceptor for the enzyme in this species is believed to be plastoquinone. Couples the redox reaction to proton translocation, and thus conserves the redox energy in a proton gradient. In Lotus japonicus (Lotus corniculatus var. japonicus), this protein is NAD(P)H-quinone oxidoreductase subunit K, chloroplastic.